Here is a 191-residue protein sequence, read N- to C-terminus: Fe/S biogenesis protein NfuA (191 aa).

Residues C149 and C152 each contribute to the [4Fe-4S] cluster site.

It belongs to the NfuA family. Homodimer. [4Fe-4S] cluster serves as cofactor.

In terms of biological role, involved in iron-sulfur cluster biogenesis. Binds a 4Fe-4S cluster, can transfer this cluster to apoproteins, and thereby intervenes in the maturation of Fe/S proteins. Could also act as a scaffold/chaperone for damaged Fe/S proteins. The sequence is that of Fe/S biogenesis protein NfuA from Edwardsiella ictaluri (strain 93-146).